A 340-amino-acid chain; its full sequence is Entry-fusion complex protein OPG094 (340 aa).

The interval 1-20 is disordered; the sequence is MGGGVSVELPKRDPPPGVPT. Residue G2 is the site of N-myristoyl glycine; by host attachment. Residues 2-319 lie on the Virion surface side of the membrane; it reads GGGVSVELPK…VQHNIKHSFD (318 aa). Residues 320–340 traverse the membrane as a helical; Signal-anchor for type II membrane protein segment; the sequence is LKLHLISLLSLLVIWILIVAI.

This sequence belongs to the orthopoxvirus OPG086 family. In terms of assembly, interacts with OPG143. Component of the entry fusion complex (EFC) composed of OPG053, OPG076, OPG086, OPG094, OPG095, OPG099, OPG107, OPG143, OPG104, OPG147 and OPG155. Except for OPG095 and OPG053, each of the EFC proteins is required for assembly or stability of the complex. In terms of processing, unglycosylated because produced in viral factories instead of the classic ER -Golgi route.

The protein localises to the virion membrane. Component of the entry fusion complex (EFC), which consists of 11 proteins. During cell infection, this complex mediates entry of the virion core into the host cytoplasm by a two-step mechanism consisting of lipid mixing of the viral and cellular membranes and subsequent pore formation. This is Entry-fusion complex protein OPG094 (OPG094) from Vaccinia virus (strain Copenhagen) (VACV).